The following is a 152-amino-acid chain: MITLTQRLDHAHPVTASVTLPIDIRVKSRAKVELNDGREAGLMLPRGLLLRGGDLLSTDDGNEIIEVIAAPESVSVVRCADPYLLARACYHLGNRHVPLQIMPGELRYHHDHVLDDMLRQFDLDVTFAHLPFEPEAGAYTSDAHSHSHAHSH.

Belongs to the UreE family.

Its subcellular location is the cytoplasm. Functionally, involved in urease metallocenter assembly. Binds nickel. Probably functions as a nickel donor during metallocenter assembly. This Enterobacter sp. (strain 638) protein is Urease accessory protein UreE.